A 298-amino-acid chain; its full sequence is MQRLSLPAPAKLNRMLHIVGRRADGYHELQTLFQFLDRSDTLHFSPRADGAIHLAPAIADVDHDANLIVRAARLLQHASGTHQGVDIHLDKRLPMGGGLGGGSSDAATTLLALDRLWSLDLGLPRLAELGLTLGADVPVFVRGHSAWAEGIGERLTPVTLDTPWFVVIHPGEEIATPAVFGHPELTRDTPPISMARALRGGAEQGRAWRNDCEAVVRRLSPDVAHALDWLSAFGPAMLTGTGSCLFCPLTSERQADRILRRVGSHWHAFKARGCNTSPLHDALGIHDEWSPMSQYGDA.

Residue Lys11 is part of the active site. ATP is bound at residue 94-104 (PMGGGLGGGSS). Residue Asp136 is part of the active site.

This sequence belongs to the GHMP kinase family. IspE subfamily.

The catalysed reaction is 4-CDP-2-C-methyl-D-erythritol + ATP = 4-CDP-2-C-methyl-D-erythritol 2-phosphate + ADP + H(+). It participates in isoprenoid biosynthesis; isopentenyl diphosphate biosynthesis via DXP pathway; isopentenyl diphosphate from 1-deoxy-D-xylulose 5-phosphate: step 3/6. In terms of biological role, catalyzes the phosphorylation of the position 2 hydroxy group of 4-diphosphocytidyl-2C-methyl-D-erythritol. This is 4-diphosphocytidyl-2-C-methyl-D-erythritol kinase from Chromohalobacter salexigens (strain ATCC BAA-138 / DSM 3043 / CIP 106854 / NCIMB 13768 / 1H11).